The following is a 627-amino-acid chain: DEAD-box ATP-dependent RNA helicase 35A (627 aa).

2 stretches are compositionally biased toward low complexity: residues 1–15 and 52–61; these read MAAA…AAAA and SSSAAEAASD. 2 disordered regions span residues 1 to 23 and 40 to 85; these read MAAA…EDNY and LRRL…LEAS. Over residues 62–72 the composition is skewed to pro residues; the sequence is LPPPPPPPPNQ. The Q motif signature appears at 182–210; the sequence is RDFRDLRLPEPMLRKLREKGIVQPTPIQV. Residues 213 to 397 form the Helicase ATP-binding domain; it reads LPVVLSGRDM…KSALVKPVIV (185 aa). Position 226–233 (226–233) interacts with ATP; it reads AFTGSGKT. The short motif at 345–348 is the DEAD box element; it reads DEAD. The Helicase C-terminal domain occupies 408–568; the sequence is DVIQEVEYVK…RIPPVLAELN (161 aa). Residues 584 to 601 form a CCHC-type zinc finger; that stretch reads KGCAYCGGLGHRVTDCPK.

The protein belongs to the DEAD box helicase family. DDX41 subfamily.

It catalyses the reaction ATP + H2O = ADP + phosphate + H(+). The polypeptide is DEAD-box ATP-dependent RNA helicase 35A (Oryza sativa subsp. japonica (Rice)).